Reading from the N-terminus, the 237-residue chain is Sulfhydrogenase 2 subunit delta (237 aa).

The [4Fe-4S] cluster site is built by Cys11, Cys14, Cys83, Cys132, Cys160, Cys163, Cys170, and Cys179. [3Fe-4S] cluster is bound by residues Cys188, Cys192, Cys199, and Cys202.

This sequence belongs to the [NiFe]/[NiFeSe] hydrogenase small subunit family. In terms of assembly, dimer of heterotetramer of alpha, beta, gamma and delta subunits. The nickel-containing alpha and delta subunits constitute the hydrogenase activity. The beta and gamma subunits (flavin-containing dimer) constitute the sulfur reductase activity. It depends on Ni(2+) as a cofactor. [4Fe-4S] cluster serves as cofactor. The cofactor is [3Fe-4S] cluster.

Its subcellular location is the cytoplasm. The catalysed reaction is H2 + NADP(+) = NADPH + H(+). It carries out the reaction H2 + NAD(+) = NADH + H(+). Its function is as follows. Part of a bifunctional enzyme complex that functions as a hydrogen-evolving hydrogenase with sulfur-reducing activity. May play a role in hydrogen cycling during fermentative growth. Activity exhibited with NAD in addition to NADPH. The alpha and delta subunits form the hydrogenase component that catalyzes the reduction of protons to evolve hydrogen. The protein is Sulfhydrogenase 2 subunit delta of Pyrococcus furiosus (strain ATCC 43587 / DSM 3638 / JCM 8422 / Vc1).